Reading from the N-terminus, the 111-residue chain is Nucleoid-associated protein glr3498 (111 aa).

This sequence belongs to the YbaB/EbfC family. In terms of assembly, homodimer.

It is found in the cytoplasm. Its subcellular location is the nucleoid. In terms of biological role, binds to DNA and alters its conformation. May be involved in regulation of gene expression, nucleoid organization and DNA protection. The chain is Nucleoid-associated protein glr3498 from Gloeobacter violaceus (strain ATCC 29082 / PCC 7421).